Here is a 256-residue protein sequence, read N- to C-terminus: 5-oxoprolinase subunit A (256 aa).

This sequence belongs to the LamB/PxpA family. As to quaternary structure, forms a complex composed of PxpA, PxpB and PxpC.

It carries out the reaction 5-oxo-L-proline + ATP + 2 H2O = L-glutamate + ADP + phosphate + H(+). In terms of biological role, catalyzes the cleavage of 5-oxoproline to form L-glutamate coupled to the hydrolysis of ATP to ADP and inorganic phosphate. This chain is 5-oxoprolinase subunit A, found in Azoarcus sp. (strain BH72).